The following is a 2225-amino-acid chain: Genome polyprotein (2225 aa).

Short sequence motifs ((L)YPX(n)L motif) lie at residues Tyr-167 to Leu-171 and Tyr-200 to Leu-205. Residues Met-766 to Gln-836 are involved in P1-2A pentamerization. A helical transmembrane segment spans residues Thr-1011–Ile-1031. A membrane-penetrating ability region spans residues Ile-1043–Glu-1070. The stretch at Lys-1127–Phe-1152 forms a coiled coil. Residues His-1204 to Met-1366 form the SF3 helicase domain. Gly-1230–Ser-1237 contacts ATP. A helical membrane pass occupies residues Trp-1460–Tyr-1480. Tyr-1497 is modified (O-(5'-phospho-RNA)-tyrosine). A Peptidase C3 domain is found at Asp-1512 to Phe-1726. Active-site for protease 3C activity residues include His-1561, Asp-1601, and Cys-1689. Residues Asp-1974 to Asn-2095 form the RdRp catalytic domain.

The protein belongs to the picornaviridae polyprotein family. In terms of assembly, homodimer. Homomultimer; probably interacts with membranes in a multimeric form. Seems to assemble into amyloid-like fibers. As to quaternary structure, homodimer. Monomer. Interacts with protein 3CD. Interacts with host ACBD3. In terms of assembly, interacts with protein 3AB. As to quaternary structure, interacts with human MAVS. Homodimer; disulfide-linked. In terms of assembly, homopentamer. Homooligomer. As to quaternary structure, interacts with capsid protein VP2. Interacts with capsid protein VP3. Interacts with capsid protein VP1. Interacts with capsid protein VP3. In terms of assembly, interacts with capsid protein VP1. Interacts with capsid protein VP2. Post-translationally, specific enzymatic cleavages by viral protease in vivo yield a variety of precursors and mature proteins. Polyprotein processing intermediates are produced, such as P1-2A which is a functional precursor of the structural proteins, VP0 which is a VP4-VP2 precursor, VP1-2A precursor, 3ABC precursor which is a stable and catalytically active precursor of 3A, 3B and 3C proteins, 3AB and 3CD precursors. The assembly signal 2A is removed from VP1-2A by a host protease, possibly host Cathepsin L. This cleavage occurs over a region of 3 amino-acids probably generating VP1 proteins with heterogeneous C-termini. In terms of processing, during virion maturation, immature virions are rendered infectious following cleavage of VP0 into VP4 and VP2. This maturation seems to be an autocatalytic event triggered by the presence of RNA in the capsid and is followed by a conformational change of the particle. The assembly signal 2A is removed from VP1-2A by a host protease, possibly host Cathepsin L in naked virions. This cleavage does not occur in enveloped virions. This cleavage occurs over a region of 3 amino-acids probably generating VP1 proteins with heterogeneous C-termini. Post-translationally, VPg is uridylylated prior to priming replication into VPg-pUpU. In terms of processing, unlike other picornaviruses, does not seem to be myristoylated.

The protein resides in the virion. It localises to the host endosome. The protein localises to the host multivesicular body. Its subcellular location is the host membrane. It is found in the host mitochondrion outer membrane. The protein resides in the host cytoplasm. It localises to the host cytoplasmic vesicle membrane. It carries out the reaction RNA(n) + a ribonucleoside 5'-triphosphate = RNA(n+1) + diphosphate. The enzyme catalyses a ribonucleoside 5'-triphosphate + H2O = a ribonucleoside 5'-diphosphate + phosphate + H(+). It catalyses the reaction Selective cleavage of Gln-|-Gly bond in the poliovirus polyprotein. In other picornavirus reactions Glu may be substituted for Gln, and Ser or Thr for Gly.. Its function is as follows. Capsid proteins VP1, VP2, and VP3 form a closed capsid enclosing the viral positive strand RNA genome. All these proteins contain a beta-sheet structure called beta-barrel jelly roll. Together they form an icosahedral capsid (T=3) composed of 60 copies of each VP1, VP2, and VP3, with a diameter of approximately 300 Angstroms. VP1 is situated at the 12 fivefold axes, whereas VP2 and VP3 are located at the quasi-sixfold axes. The naked capsid interacts with the host receptor HAVCR1 to provide virion attachment to and probably entry into the target cell. VP0 precursor is a component of the immature procapsids. Functionally, plays a role in the assembly of the 12 pentamers into an icosahedral structure. Has not been detected in mature virions, supposedly owing to its small size. In terms of biological role, precursor component of immature procapsids that corresponds to an extended form of the structural protein VP1. After maturation, possibly by the host Cathepsin L, the assembly signal 2A is cleaved to give rise to the mature VP1 protein. Its function is as follows. Functions as a viroporin. Affects membrane integrity and causes an increase in membrane permeability. Involved in host intracellular membrane rearrangements probably to give rise to the viral factories. Does not disrupt calcium homeostasis or glycoprotein trafficking. Antagonizes the innate immune response of the host by suppressing IFN-beta synthesis, which it achieves by interfering with the RIG-I/IFIH1 pathway. Affects membrane integrity and causes an increase in membrane permeability. Functionally, associates with and induces structural rearrangements of intracellular membranes. Displays RNA-binding activity. In terms of biological role, the precursor 3ABC is targeted to the mitochondrial membrane where protease 3C activity cleaves and inhibits the host antiviral protein MAVS, thereby disrupting activation of IRF3 through the IFIH1/MDA5 pathway. In vivo, the protease activity of 3ABC precursor is more efficient in cleaving the 2BC precursor than that of protein 3C. The 3ABC precursor may therefore play a role in the proteolytic processing of the polyprotein. Possible viroporin. Its function is as follows. Interacts with the 3CD precursor and with RNA structures found at both the 5'- and 3'-termini of the viral genome. Since the 3AB precursor contains the hydrophobic domain 3A, it probably anchors the whole viral replicase complex to intracellular membranes on which viral RNA synthesis occurs. May serve as membrane anchor to the 3AB and 3ABC precursors via its hydrophobic domain. May interact with RNA. Functionally, acts as a primer for viral RNA replication and remains covalently bound to viral genomic RNA. VPg is uridylylated prior to priming replication into VPg-pUpU. The VPg-pUpU is then used as primer on the genomic RNA poly(A) by the RNA-dependent RNA polymerase to replicate the viral genome. In terms of biological role, cysteine protease that generates mature viral proteins from the precursor polyprotein. In addition to its proteolytic activity, it binds to viral RNA, and thus influences viral genome replication. RNA and substrate bind cooperatively to the protease. Cleaves IKBKG/NEMO to impair innate immune signaling. Cleaves host PABPC1 which may participate in the switch of viral translation to RNA synthesis. Its function is as follows. Interacts with the 3AB precursor and with RNA structures found at both the 5'- and 3'-termini of the viral genome. Disrupts TLR3 signaling by degrading the host adapter protein TICAM1/TRIF. RNA-directed RNA polymerase 3D-POL replicates genomic and antigenomic RNA by recognizing replications specific signals. This chain is Genome polyprotein, found in Homo sapiens (Human).